A 246-amino-acid polypeptide reads, in one-letter code: Metallo-beta-lactamase type 2 (246 aa).

The first 20 residues, methionine 1–alanine 20, serve as a signal peptide directing secretion. Histidine 95, histidine 97, aspartate 99, histidine 157, and cysteine 176 together coordinate Zn(2+). Position 99 (aspartate 99) interacts with a beta-lactam. The a beta-lactam site is built by lysine 179 and asparagine 185. Position 215 (histidine 215) interacts with Zn(2+).

It belongs to the metallo-beta-lactamase superfamily. Class-B beta-lactamase family. Monomer. Zn(2+) is required as a cofactor.

The protein localises to the periplasm. It carries out the reaction a beta-lactam + H2O = a substituted beta-amino acid. Confers resistance to the different beta-lactam antibiotics (penicillin, cephalosporin and carbapenem) via the hydrolysis of the beta-lactam ring. Exhibits higher catalytic efficiency toward ticarcillin and piperacillin than blaIMP-1. Exhibits catalytic activity for carbapenem compounds, but has a preference for imipenem and ertapenem over meropenem. Has high efficiency for the hydrolysis of cefuroxime. Exhibits hydrolysis of all cephalosporins tested. Exhibits no hydrolysis of temocillin, the 6-alpha-methoxy semisynthetic derivative of ticarcillin. The sequence is that of Metallo-beta-lactamase type 2 from Pseudomonas aeruginosa.